Here is a 261-residue protein sequence, read N- to C-terminus: Proteasome subunit alpha type-4 (261 aa).

Residues S13 and S75 each carry the phosphoserine modification. At K127 the chain carries N6-acetyllysine. S173 carries the phosphoserine modification. K176 carries the N6-acetyllysine modification. A disordered region spans residues 240-261 (HEEEEAKAEREKKEKEQKEKDK).

This sequence belongs to the peptidase T1A family. As to quaternary structure, the 26S proteasome consists of a 20S proteasome core and two 19S regulatory subunits. The 20S proteasome core is a barrel-shaped complex made of 28 subunits that are arranged in four stacked rings. The two outer rings are each formed by seven alpha subunits, and the two inner rings are formed by seven beta subunits. The proteolytic activity is exerted by three beta-subunits PSMB5, PSMB6 and PSMB7.

It is found in the cytoplasm. The protein localises to the nucleus. Component of the 20S core proteasome complex involved in the proteolytic degradation of most intracellular proteins. This complex plays numerous essential roles within the cell by associating with different regulatory particles. Associated with two 19S regulatory particles, forms the 26S proteasome and thus participates in the ATP-dependent degradation of ubiquitinated proteins. The 26S proteasome plays a key role in the maintenance of protein homeostasis by removing misfolded or damaged proteins that could impair cellular functions, and by removing proteins whose functions are no longer required. Associated with the PA200 or PA28, the 20S proteasome mediates ubiquitin-independent protein degradation. This type of proteolysis is required in several pathways including spermatogenesis (20S-PA200 complex) or generation of a subset of MHC class I-presented antigenic peptides (20S-PA28 complex). The sequence is that of Proteasome subunit alpha type-4 (PSMA4) from Bos taurus (Bovine).